Reading from the N-terminus, the 341-residue chain is Galactofuranose transporter permease protein YtfT (341 aa).

At 1-25 (MMPQSLPDTTTPKRRFRWPTGMPQL) the chain is on the cytoplasmic side. A helical membrane pass occupies residues 26–46 (VALLLVLLVDSLVAPHFWQVV). Residues 47–65 (LQDGRLFGSPIDILNRAAP) lie on the Periplasmic side of the membrane. Transmembrane regions (helical) follow at residues 66–86 (VALL…DLSV) and 87–107 (GAVM…GFSL). Position 108 (Pro-108) is a topological domain, periplasmic. The helical transmembrane segment at 109 to 129 (IVLLSALGTGILAGLWNGILV) threads the bilayer. The Cytoplasmic portion of the chain corresponds to 130-136 (AILKIQP). A helical transmembrane segment spans residues 137–157 (FVATLILMVAGRGVAQLITAG). Over 158-174 (QIVTFNSPDLSWFGSGS) the chain is Periplasmic. The helical transmembrane segment at 175–195 (LLFLPTPVIIAVLTLILFWLL) threads the bilayer. Over 196–223 (TRKTALGMFIEAVGINIRAAKNAGVNTR) the chain is Cytoplasmic. The helical transmembrane segment at 224 to 244 (IIVMLTYVLSGLCAAIAGIIV) threads the bilayer. Topologically, residues 245 to 255 (AADIRGADANN) are periplasmic. Residues 256-276 (AGLWLELDAILAVVIGGGSLM) traverse the membrane as a helical segment. Topologically, residues 277–281 (GGRFN) are cytoplasmic. 2 helical membrane-spanning segments follow: residues 282-302 (LLLS…ILLS) and 303-323 (GFPP…VLIV). The Cytoplasmic portion of the chain corresponds to 324-341 (QSQRFISLIKGVRSRDKT).

It belongs to the binding-protein-dependent transport system permease family. AraH/RbsC subfamily. In terms of assembly, the complex is composed of two ATP-binding proteins (YtfR), two transmembrane proteins (YtfT and YjfF) and a solute-binding protein (YtfQ).

It is found in the cell inner membrane. Its function is as follows. Part of the ABC transporter complex YtfQRT-YjfF involved in galactofuranose transport. Probably responsible for the translocation of the substrate across the membrane. In Escherichia coli (strain K12), this protein is Galactofuranose transporter permease protein YtfT (ytfT).